We begin with the raw amino-acid sequence, 651 residues long: Crossover junction endonuclease MUS81 (651 aa).

The tract at residues 99–124 (RKHEVSDTSNLPDAKPKKQRKQKQYI) is disordered. Residues 115-124 (KKQRKQKQYI) show a composition bias toward basic residues. In terms of domain architecture, ERCC4 spans 361 to 458 (ILIIDNREIR…QFYYLVEDVV (98 aa)).

It belongs to the XPF family. In terms of assembly, interacts with EME1. Requires Mg(2+) as cofactor.

The protein localises to the nucleus. Its function is as follows. Interacts with EME1 to form a DNA structure-specific endonuclease with substrate preference for branched DNA structures with a 5'-end at the branch nick. Typical substrates include 3'-flap structures, D-loops, replication forks and nicked Holliday junctions. May be required in mitosis for the processing of stalled or collapsed replication fork intermediates. May be required in meiosis for the repair of meiosis-specific double strand breaks subsequent to single-end invasion (SEI). The protein is Crossover junction endonuclease MUS81 (MUS81) of Debaryomyces hansenii (strain ATCC 36239 / CBS 767 / BCRC 21394 / JCM 1990 / NBRC 0083 / IGC 2968) (Yeast).